A 339-amino-acid chain; its full sequence is Ribosomal RNA small subunit methyltransferase C (339 aa).

Belongs to the methyltransferase superfamily. RsmC family. Monomer.

It is found in the cytoplasm. The enzyme catalyses guanosine(1207) in 16S rRNA + S-adenosyl-L-methionine = N(2)-methylguanosine(1207) in 16S rRNA + S-adenosyl-L-homocysteine + H(+). Specifically methylates the guanine in position 1207 of 16S rRNA in the 30S particle. The chain is Ribosomal RNA small subunit methyltransferase C from Aliivibrio fischeri (strain ATCC 700601 / ES114) (Vibrio fischeri).